A 360-amino-acid polypeptide reads, in one-letter code: Photosystem II protein D1 1 (360 aa).

Helical transmembrane passes span tyrosine 29–valine 46, histidine 118–leucine 133, and tryptophan 142–alanine 156. Position 118 (histidine 118) interacts with chlorophyll a. Tyrosine 126 serves as a coordination point for pheophytin a. [CaMn4O5] cluster is bound by residues aspartate 170 and glutamate 189. Residues phenylalanine 197 to leucine 218 form a helical membrane-spanning segment. Histidine 198 is a binding site for chlorophyll a. Residues histidine 215 and serine 264 to phenylalanine 265 contribute to the a quinone site. Histidine 215 contacts Fe cation. A Fe cation-binding site is contributed by histidine 272. Residues phenylalanine 274–leucine 288 traverse the membrane as a helical segment. Histidine 332, glutamate 333, aspartate 342, and alanine 344 together coordinate [CaMn4O5] cluster. Positions alanine 345–glycine 360 are excised as a propeptide.

It belongs to the reaction center PufL/M/PsbA/D family. PSII is composed of 1 copy each of membrane proteins PsbA, PsbB, PsbC, PsbD, PsbE, PsbF, PsbH, PsbI, PsbJ, PsbK, PsbL, PsbM, PsbT, PsbX, PsbY, PsbZ, Psb30/Ycf12, peripheral proteins PsbO, CyanoQ (PsbQ), PsbU, PsbV and a large number of cofactors. It forms dimeric complexes. Requires The D1/D2 heterodimer binds P680, chlorophylls that are the primary electron donor of PSII, and subsequent electron acceptors. It shares a non-heme iron and each subunit binds pheophytin, quinone, additional chlorophylls, carotenoids and lipids. D1 provides most of the ligands for the Mn4-Ca-O5 cluster of the oxygen-evolving complex (OEC). There is also a Cl(-1) ion associated with D1 and D2, which is required for oxygen evolution. The PSII complex binds additional chlorophylls, carotenoids and specific lipids. as cofactor. Tyr-161 forms a radical intermediate that is referred to as redox-active TyrZ, YZ or Y-Z. In terms of processing, C-terminally processed by CtpA; processing is essential to allow assembly of the oxygen-evolving complex and thus photosynthetic growth.

Its subcellular location is the cellular thylakoid membrane. It catalyses the reaction 2 a plastoquinone + 4 hnu + 2 H2O = 2 a plastoquinol + O2. In terms of biological role, photosystem II (PSII) is a light-driven water:plastoquinone oxidoreductase that uses light energy to abstract electrons from H(2)O, generating O(2) and a proton gradient subsequently used for ATP formation. It consists of a core antenna complex that captures photons, and an electron transfer chain that converts photonic excitation into a charge separation. The D1/D2 (PsbA/PsbD) reaction center heterodimer binds P680, the primary electron donor of PSII as well as several subsequent electron acceptors. The sequence is that of Photosystem II protein D1 1 from Nostoc sp. (strain PCC 7120 / SAG 25.82 / UTEX 2576).